We begin with the raw amino-acid sequence, 891 residues long: Longitudinals lacking protein, isoform G (891 aa).

The BTB domain maps to 32–97 (VDCTLAAEGK…MYRGEVNISQ (66 aa)). Disordered stretches follow at residues 115 to 200 (LSDN…SSVL) and 228 to 340 (SSGP…ASAS). The residue at position 140 (Ser140) is a Phosphoserine. Phosphothreonine is present on Thr161. 2 positions are modified to phosphoserine: Ser162 and Ser168. Composition is skewed to low complexity over residues 162–175 (SGDV…SSSP), 228–251 (SSGP…LTST), 263–293 (TSST…QTTS), and 329–340 (NSATGPNPASAS). 3 positions are modified to phosphoserine: Ser372, Ser375, and Ser378. The tract at residues 446–467 (QDAQQRDPQDLSRKENTAPDVA) is disordered. A compositionally biased stretch (basic and acidic residues) spans 449–462 (QQRDPQDLSRKENT). Ser696 and Ser705 each carry phosphoserine. Position 706 is a phosphothreonine (Thr706). A phosphoserine mark is found at Ser749 and Ser750. A C2H2-type 1; degenerate zinc finger spans residues 791 to 813 (YECRHCGKKYRWKSTLRRHENVE). The segment at 821 to 843 (HQCPYCPYKSKQRGNLGVHVRKH) adopts a C2H2-type 2 zinc-finger fold. Residues 840-891 (VRKHHTDLPQLPSKRRSKYSMNRENGMSGSMSDDSQGKLIIDFNGKGELETK) are disordered. Ser874 is subject to Phosphoserine.

As to expression, expressed in both mesoderm and ectoderm with expression highest in the mesectoderm by stage 11. Becomes enriched in a cluster of brain cells, in abdominal histoblasts, and in the embryonic imaginal disks during later stages.

The protein resides in the nucleus. Its function is as follows. Putative transcription factor required for axon growth and guidance in the central and peripheral nervous systems. Repels CNS axons away from the midline by promoting the expression of the midline repellent sli and its receptor robo. The chain is Longitudinals lacking protein, isoform G from Drosophila melanogaster (Fruit fly).